Reading from the N-terminus, the 456-residue chain is Membrane-bound lytic murein transglycosylase F (456 aa).

Residues 1–22 form the signal peptide; that stretch reads MKTWPSRAVSLLLLALALPVGC. The interval 23–267 is non-LT domain; that stretch reads SEPPPPVRDP…ALDETWFGRF (245 aa). Residues 268–456 are LT domain; that stretch reads GDYDYVDVAR…YRALLAAQDL (189 aa). Glu-314 is an active-site residue.

In the N-terminal section; belongs to the bacterial solute-binding protein 3 family. It in the C-terminal section; belongs to the transglycosylase Slt family.

The protein localises to the cell outer membrane. The enzyme catalyses Exolytic cleavage of the (1-&gt;4)-beta-glycosidic linkage between N-acetylmuramic acid (MurNAc) and N-acetylglucosamine (GlcNAc) residues in peptidoglycan, from either the reducing or the non-reducing ends of the peptidoglycan chains, with concomitant formation of a 1,6-anhydrobond in the MurNAc residue.. Its function is as follows. Murein-degrading enzyme that degrades murein glycan strands and insoluble, high-molecular weight murein sacculi, with the concomitant formation of a 1,6-anhydromuramoyl product. Lytic transglycosylases (LTs) play an integral role in the metabolism of the peptidoglycan (PG) sacculus. Their lytic action creates space within the PG sacculus to allow for its expansion as well as for the insertion of various structures such as secretion systems and flagella. The chain is Membrane-bound lytic murein transglycosylase F from Maricaulis maris (strain MCS10) (Caulobacter maris).